A 63-amino-acid polypeptide reads, in one-letter code: Large ribosomal subunit protein uL29 (63 aa).

This sequence belongs to the universal ribosomal protein uL29 family.

This chain is Large ribosomal subunit protein uL29, found in Flavobacterium psychrophilum (strain ATCC 49511 / DSM 21280 / CIP 103535 / JIP02/86).